The chain runs to 389 residues: Inner membrane transport protein YdhP (389 aa).

Topologically, residues 1–6 are cytoplasmic; it reads MKINYP. The helical transmembrane segment at 7 to 27 threads the bilayer; sequence LLALAIGAFGIGTTEFSPMGL. Topologically, residues 28-43 are periplasmic; sequence LPVIARGVDVSIPAAG. A helical membrane pass occupies residues 44 to 64; sequence MLISAYAVGVMVGAPLMTLLL. At 65–70 the chain is on the cytoplasmic side; sequence SHRARR. The helical transmembrane segment at 71–91 threads the bilayer; the sequence is SALIFLMAIFTLGNVLSAIAP. Residues 92–100 are Periplasmic-facing; it reads DYMTLMLSR. The helical transmembrane segment at 101 to 121 threads the bilayer; that stretch reads ILTSLNHGAFFGLGSVVAASV. Over 122–130 the chain is Cytoplasmic; it reads VPKHKQASA. Residues 131–151 traverse the membrane as a helical segment; that stretch reads VATMFMGLTLANIGGVPAATW. Over 152–159 the chain is Periplasmic; it reads LGETIGWR. Residues 160–180 form a helical membrane-spanning segment; that stretch reads MSFLATAGLGVISMVSLFFSL. At 181–203 the chain is on the cytoplasmic side; that stretch reads PKGGAGARPEVKKELAVLMRPQV. The helical transmembrane segment at 204-224 threads the bilayer; the sequence is LSALLTTVLGAGAMFTLYTYI. The Periplasmic segment spans residues 225 to 236; that stretch reads SPVLQSITHATP. The chain crosses the membrane as a helical span at residues 237–257; sequence VFVTAMLVLIGVGFSIGNYLG. Topologically, residues 258 to 266 are cytoplasmic; that stretch reads GKLADRSVN. The helical transmembrane segment at 267 to 287 threads the bilayer; it reads GTLKGFLLLLMVIMLAIPFLA. Topologically, residues 288–290 are periplasmic; sequence RNK. A helical transmembrane segment spans residues 291–311; that stretch reads FGAAISMAVWGAATFAVVPPL. The Cytoplasmic segment spans residues 312 to 330; sequence QMRVMRVASEAPGLSSSVN. Residues 331-351 form a helical membrane-spanning segment; that stretch reads IGAFNLGNALGAAAGGAVISA. Topologically, residues 352–356 are periplasmic; sequence GLGYS. Residues 357-377 traverse the membrane as a helical segment; sequence FVPVMGAIVAGLALLLVFMSA. Residues 378-389 are Cytoplasmic-facing; that stretch reads RKQPETVCVANS.

It belongs to the major facilitator superfamily.

Its subcellular location is the cell inner membrane. This Escherichia coli O157:H7 protein is Inner membrane transport protein YdhP (ydhP).